We begin with the raw amino-acid sequence, 638 residues long: DNA gyrase subunit B (638 aa).

The 115-residue stretch at serine 422–proline 536 folds into the Toprim domain. Positions 428, 501, and 503 each coordinate Mg(2+).

It belongs to the type II topoisomerase GyrB family. Heterotetramer, composed of two GyrA and two GyrB chains. In the heterotetramer, GyrA contains the active site tyrosine that forms a transient covalent intermediate with DNA, while GyrB binds cofactors and catalyzes ATP hydrolysis. Mg(2+) is required as a cofactor. Mn(2+) serves as cofactor. Requires Ca(2+) as cofactor.

It is found in the cytoplasm. It catalyses the reaction ATP-dependent breakage, passage and rejoining of double-stranded DNA.. Functionally, a type II topoisomerase that negatively supercoils closed circular double-stranded (ds) DNA in an ATP-dependent manner to modulate DNA topology and maintain chromosomes in an underwound state. Negative supercoiling favors strand separation, and DNA replication, transcription, recombination and repair, all of which involve strand separation. Also able to catalyze the interconversion of other topological isomers of dsDNA rings, including catenanes and knotted rings. Type II topoisomerases break and join 2 DNA strands simultaneously in an ATP-dependent manner. This chain is DNA gyrase subunit B, found in Bacillus subtilis (strain 168).